A 272-amino-acid chain; its full sequence is Energy-coupling factor transporter ATP-binding protein EcfA1 (272 aa).

In terms of domain architecture, ABC transporter spans 2–237; it reads IKVSDVCFSY…KNIIEKAKID (236 aa). 37 to 44 contacts ATP; that stretch reads GHNGSGKS.

This sequence belongs to the ABC transporter superfamily. Energy-coupling factor EcfA family. In terms of assembly, forms a stable energy-coupling factor (ECF) transporter complex composed of 2 membrane-embedded substrate-binding proteins (S component), 2 ATP-binding proteins (A component) and 2 transmembrane proteins (T component).

The protein localises to the cell membrane. Its function is as follows. ATP-binding (A) component of a common energy-coupling factor (ECF) ABC-transporter complex. Unlike classic ABC transporters this ECF transporter provides the energy necessary to transport a number of different substrates. The chain is Energy-coupling factor transporter ATP-binding protein EcfA1 from Mesomycoplasma hyopneumoniae (strain J / ATCC 25934 / NCTC 10110) (Mycoplasma hyopneumoniae).